A 247-amino-acid chain; its full sequence is Small ribosomal subunit protein uS3 (247 aa).

The region spanning 39–109 (IRSMIRSFPE…KVQIKVKEIK (71 aa)) is the KH type-2 domain. The disordered stretch occupies residues 224 to 247 (RSRRESGQKSDELVRDERTHAERG). Residues 227 to 247 (RESGQKSDELVRDERTHAERG) show a composition bias toward basic and acidic residues.

It belongs to the universal ribosomal protein uS3 family. In terms of assembly, part of the 30S ribosomal subunit. Forms a tight complex with proteins S10 and S14.

Its function is as follows. Binds the lower part of the 30S subunit head. Binds mRNA in the 70S ribosome, positioning it for translation. In Treponema pallidum (strain Nichols), this protein is Small ribosomal subunit protein uS3.